The primary structure comprises 73 residues: Translation initiation factor IF-1 (73 aa).

The 73-residue stretch at 1–73 folds into the S1-like domain; that stretch reads MPKKEGVIEI…TRGRIVYRYK (73 aa).

The protein belongs to the IF-1 family. As to quaternary structure, component of the 30S ribosomal translation pre-initiation complex which assembles on the 30S ribosome in the order IF-2 and IF-3, IF-1 and N-formylmethionyl-tRNA(fMet); mRNA recruitment can occur at any time during PIC assembly.

It localises to the cytoplasm. Its function is as follows. One of the essential components for the initiation of protein synthesis. Stabilizes the binding of IF-2 and IF-3 on the 30S subunit to which N-formylmethionyl-tRNA(fMet) subsequently binds. Helps modulate mRNA selection, yielding the 30S pre-initiation complex (PIC). Upon addition of the 50S ribosomal subunit IF-1, IF-2 and IF-3 are released leaving the mature 70S translation initiation complex. In Nocardioides sp. (strain ATCC BAA-499 / JS614), this protein is Translation initiation factor IF-1.